A 503-amino-acid chain; its full sequence is Lanosterol 14-alpha demethylase (503 aa).

The helical transmembrane segment at 24 to 44 (GNLLSTLLIACAFTLSLVYLF) threads the bilayer. C449 is a binding site for heme.

It belongs to the cytochrome P450 family. Heme serves as cofactor. Post-translationally, ubiquitinated by MARCHF6, leading to proteasomal degradation.

The protein localises to the endoplasmic reticulum membrane. Its subcellular location is the microsome membrane. It carries out the reaction a 14alpha-methyl steroid + 3 reduced [NADPH--hemoprotein reductase] + 3 O2 = a Delta(14) steroid + formate + 3 oxidized [NADPH--hemoprotein reductase] + 4 H2O + 4 H(+). The enzyme catalyses lanosterol + 3 reduced [NADPH--hemoprotein reductase] + 3 O2 = 4,4-dimethyl-5alpha-cholesta-8,14,24-trien-3beta-ol + formate + 3 oxidized [NADPH--hemoprotein reductase] + 4 H2O + 4 H(+). The catalysed reaction is 24,25-dihydrolanosterol + 3 reduced [NADPH--hemoprotein reductase] + 3 O2 = 4,4-dimethyl-8,14-cholestadien-3beta-ol + formate + 3 oxidized [NADPH--hemoprotein reductase] + 4 H2O + 4 H(+). It catalyses the reaction a 14alpha-methyl steroid + reduced [NADPH--hemoprotein reductase] + O2 = a 14alpha-hydroxymethyl steroid + oxidized [NADPH--hemoprotein reductase] + H2O + H(+). It carries out the reaction a 14alpha-hydroxymethyl steroid + reduced [NADPH--hemoprotein reductase] + O2 = a 14alpha-formyl steroid + oxidized [NADPH--hemoprotein reductase] + 2 H2O + H(+). The enzyme catalyses a 14alpha-formyl steroid + reduced [NADPH--hemoprotein reductase] + O2 = a Delta(14) steroid + formate + oxidized [NADPH--hemoprotein reductase] + H2O + 2 H(+). The catalysed reaction is lanosterol + reduced [NADPH--hemoprotein reductase] + O2 = 32-hydroxylanosterol + oxidized [NADPH--hemoprotein reductase] + H2O + H(+). It catalyses the reaction 32-hydroxylanosterol + reduced [NADPH--hemoprotein reductase] + O2 = 32-oxolanosterol + oxidized [NADPH--hemoprotein reductase] + 2 H2O + H(+). It carries out the reaction 32-oxolanosterol + reduced [NADPH--hemoprotein reductase] + O2 = 4,4-dimethyl-5alpha-cholesta-8,14,24-trien-3beta-ol + formate + oxidized [NADPH--hemoprotein reductase] + H2O + 2 H(+). The enzyme catalyses 24,25-dihydrolanosterol + reduced [NADPH--hemoprotein reductase] + O2 = 32-hydroxy-24,25-dihydrolanosterol + oxidized [NADPH--hemoprotein reductase] + H2O + H(+). The catalysed reaction is 32-hydroxy-24,25-dihydrolanosterol + reduced [NADPH--hemoprotein reductase] + O2 = 32-oxo-24,25-dihydrolanosterol + oxidized [NADPH--hemoprotein reductase] + 2 H2O + H(+). It catalyses the reaction 32-oxo-24,25-dihydrolanosterol + reduced [NADPH--hemoprotein reductase] + O2 = 4,4-dimethyl-8,14-cholestadien-3beta-ol + formate + oxidized [NADPH--hemoprotein reductase] + H2O + 2 H(+). The protein operates within steroid biosynthesis; zymosterol biosynthesis; zymosterol from lanosterol: step 1/6. With respect to regulation, inhibited by azalanstat. Inhibited by azole antifungal agents ketoconazole, itraconazole and fluconazole. Sterol 14alpha-demethylase that plays a critical role in the cholesterol biosynthesis pathway, being cholesterol the major sterol component in mammalian membranes as well as a precursor for bile acid and steroid hormone synthesis. Cytochrome P450 monooxygenase that catalyzes the three-step oxidative removal of the 14alpha-methyl group (C-32) of sterols such as lanosterol (lanosta-8,24-dien-3beta-ol) and 24,25-dihydrolanosterol (DHL) in the form of formate, and converts the sterols to 4,4-dimethyl-5alpha-cholesta-8,14,24-trien-3beta-ol and 4,4-dimethyl-8,14-cholestadien-3beta-ol, respectively, which are intermediates of cholesterol biosynthesis. Can also demethylate substrates not intrinsic to mammals, such as eburicol (24-methylene-24,25-dihydrolanosterol), but at a lower rate than DHL. In Rattus norvegicus (Rat), this protein is Lanosterol 14-alpha demethylase.